The chain runs to 212 residues: MNQSLLAPYGNAIERVNAALTALRQGKGVLVVDDEDRENEGDLIYSAETLTNEQMALLIRECSGIVCLCLTDERIEQLQLPPMVSDNNSQYGTAFTVSIEAKQGVTTGVSAADRVTTIKTAIADNAKPDDLARPGHVYPLRARPGGVLERRGHTEGTVDLMKLAGLKPYGVLCEVTLVDGTMARLPEIIEFGQQHDMPVLTIEDIVAYRTTQ.

D-ribulose 5-phosphate contacts are provided by residues 37–38 (RE), D42, 150–154 (RRGHT), and E174. E38 lines the Mg(2+) pocket. Position 153 (H153) interacts with Mg(2+).

The protein belongs to the DHBP synthase family. In terms of assembly, homodimer. The cofactor is Mg(2+). Requires Mn(2+) as cofactor.

The catalysed reaction is D-ribulose 5-phosphate = (2S)-2-hydroxy-3-oxobutyl phosphate + formate + H(+). It participates in cofactor biosynthesis; riboflavin biosynthesis; 2-hydroxy-3-oxobutyl phosphate from D-ribulose 5-phosphate: step 1/1. Catalyzes the conversion of D-ribulose 5-phosphate to formate and 3,4-dihydroxy-2-butanone 4-phosphate. The protein is 3,4-dihydroxy-2-butanone 4-phosphate synthase of Shewanella halifaxensis (strain HAW-EB4).